Consider the following 362-residue polypeptide: Severin (362 aa).

Residues 53–102 form a Gelsolin-like 1 repeat; that stretch reads FKVVPVPESSYGKFYDGDSYIILHTFKEGNSLKHDIHFFLGTFTTQDEAG. Position 162-170 (162-170) interacts with a 1,2-diacyl-sn-glycero-3-phospho-(1D-myo-inositol-4,5-bisphosphate); it reads RLLHISGDK. Gelsolin-like repeat units follow at residues 172–212 and 280–323; these read AKVA…QEKN and LKFS…NEKK.

It belongs to the villin/gelsolin family.

Its function is as follows. Severin blocks the ends of F-actin and causes the fragmentation and depolymerization of actin filaments in a Ca(2+) dependent manner. The sequence is that of Severin (sevA) from Dictyostelium discoideum (Social amoeba).